Consider the following 1052-residue polypeptide: Multidrug resistance protein MdtB (1052 aa).

The next 11 helical transmembrane spans lie at 15 to 37, 345 to 362, 367 to 389, 396 to 418, 438 to 460, 472 to 494, 535 to 557, 867 to 889, 909 to 931, 968 to 990, and 1000 to 1022; these read LFIL…GIIG, FELL…YLFL, ATII…MYFL, LTLM…VIEN, GEIG…PLLF, FAVT…TPMM, HPWL…YLLI, LWLI…ESFI, LMLT…IGIV, ILMT…GVGA, and MVGG…YLLF. The segment at 1032–1052 is disordered; sequence KNRHRDEDIDSSELLNGQEPQ.

The protein belongs to the resistance-nodulation-cell division (RND) (TC 2.A.6) family. MdtB subfamily. Part of a tripartite efflux system composed of MdtA, MdtB and MdtC. MdtB forms a heteromultimer with MdtC.

Its subcellular location is the cell inner membrane. The protein is Multidrug resistance protein MdtB of Yersinia pestis.